Consider the following 306-residue polypeptide: Palmitoyl-protein thioesterase 1 (306 aa).

The signal sequence occupies residues 1 to 27; it reads MASSSCLWLLALAFLLGSCASLALGHL. Cystine bridges form between Cys45–Cys46, Cys96–Cys128, and Cys152–Cys160. Ser115 is an active-site residue. N-linked (GlcNAc...) asparagine glycans are attached at residues Asn197, Asn212, and Asn232. Active-site residues include Asp233 and His289.

The protein belongs to the palmitoyl-protein thioesterase family. As to quaternary structure, interacts with CLN5, ATP5F1A and ATP5F1B. Glycosylated. In terms of tissue distribution, spleen, brain, seminal vesicle, and testis. Lower levels of activity in liver, heart, lung, and skeletal muscle.

It localises to the lysosome. Its subcellular location is the secreted. It is found in the golgi apparatus. The protein resides in the endoplasmic reticulum. The catalysed reaction is S-hexadecanoyl-L-cysteinyl-[protein] + H2O = L-cysteinyl-[protein] + hexadecanoate + H(+). It carries out the reaction hexadecanoyl-CoA + H2O = hexadecanoate + CoA + H(+). The enzyme catalyses S-hexadecanoyl-N-acetylcysteamine + H2O = N-acetylcysteamine + hexadecanoate + H(+). It catalyses the reaction S-hexadecanoyl-N-acetylcysteine methyl ester + H2O = N-acetylcysteine methyl ester + hexadecanoate + H(+). Its activity is regulated as follows. Palmitoylation reduces PPT1 enzymatic activity. In terms of biological role, has thioesterase activity against fatty acid thioesters with 14 -18 carbons, including palmitoyl-CoA, S-palmitoyl-N-acetylcysteamine, and palmitoylated proteins. In contrast to PPT2, PPT1 can hydrolyze palmitoylated proteins and palmitoylcysteine. The polypeptide is Palmitoyl-protein thioesterase 1 (PPT1) (Bos taurus (Bovine)).